The primary structure comprises 1207 residues: DNA-directed RNA polymerase subunit beta' (1207 aa).

Positions 60, 62, 75, and 78 each coordinate Zn(2+). The Mg(2+) site is built by Asp449, Asp451, and Asp453. Zn(2+) contacts are provided by Cys822, Cys896, Cys903, and Cys906.

The protein belongs to the RNA polymerase beta' chain family. In terms of assembly, the RNAP catalytic core consists of 2 alpha, 1 beta, 1 beta' and 1 omega subunit. When a sigma factor is associated with the core the holoenzyme is formed, which can initiate transcription. Requires Mg(2+) as cofactor. Zn(2+) serves as cofactor.

It catalyses the reaction RNA(n) + a ribonucleoside 5'-triphosphate = RNA(n+1) + diphosphate. Its function is as follows. DNA-dependent RNA polymerase catalyzes the transcription of DNA into RNA using the four ribonucleoside triphosphates as substrates. The polypeptide is DNA-directed RNA polymerase subunit beta' (Staphylococcus epidermidis (strain ATCC 35984 / DSM 28319 / BCRC 17069 / CCUG 31568 / BM 3577 / RP62A)).